Consider the following 355-residue polypeptide: Heterogeneous nuclear ribonucleoprotein D0 (355 aa).

A disordered region spans residues Met-1–Ala-91. Ser-2 is modified (N-acetylserine). Residues Ala-11 to Gly-43 are compositionally biased toward low complexity. Residues Ser-44–Gly-58 are compositionally biased toward gly residues. The span at Glu-64–Asn-73 shows a compositional bias: basic and acidic residues. Ser-71 carries the phosphoserine modification. Lys-72 participates in a covalent cross-link: Glycyl lysine isopeptide (Lys-Gly) (interchain with G-Cter in SUMO2). Ser-80, Ser-82, and Ser-83 each carry phosphoserine. RRM domains follow at residues Trp-97–Glu-179 and Lys-182–Glu-261. Lys-119 bears the N6-methyllysine mark. A Phosphothreonine modification is found at Thr-127. Residue Lys-129 forms a Glycyl lysine isopeptide (Lys-Gly) (interchain with G-Cter in SUMO2) linkage. N6-acetyllysine is present on Lys-165. The residue at position 190 (Ser-190) is a Phosphoserine. Thr-193 carries the phosphothreonine modification. Residue Lys-197 forms a Glycyl lysine isopeptide (Lys-Gly) (interchain with G-Cter in SUMO2) linkage. N6-acetyllysine occurs at positions 243 and 251. Omega-N-methylarginine occurs at positions 261 and 263. Ser-271 bears the Phosphoserine mark. Omega-N-methylarginine occurs at positions 272, 278, 280, and 282. Arg-345 is subject to Asymmetric dimethylarginine; alternate. A Dimethylated arginine; alternate modification is found at Arg-345. Arg-345 is subject to Omega-N-methylarginine; alternate.

Identified in a IGF2BP1-dependent mRNP granule complex containing untranslated mRNAs. Part of a complex associated with the FOS mCRD domain and consisting of PABPC1, PAIP1, CSDE1/UNR and SYNCRIP. Interacts with IGF2BP2. Interacts with GTPBP1. Interacts with EIF4G1; the interaction requires RNA. Interacts with EIF3B and RPS3. Methylated by PRMT1, in an insulin-dependent manner. The PRMT1-mediated methylation regulates its phosphorylation. In terms of processing, arg-345 is dimethylated, probably to asymmetric dimethylarginine.

Its subcellular location is the nucleus. It localises to the cytoplasm. In terms of biological role, binds with high affinity to RNA molecules that contain AU-rich elements (AREs) found within the 3'-UTR of many proto-oncogenes and cytokine mRNAs. Also binds to double- and single-stranded DNA sequences in a specific manner and functions a transcription factor. Each of the RNA-binding domains specifically can bind solely to a single-stranded non-monotonous 5'-UUAG-3' sequence and also weaker to the single-stranded 5'-TTAGGG-3' telomeric DNA repeat. Binds RNA oligonucleotides with 5'-UUAGGG-3' repeats more tightly than the telomeric single-stranded DNA 5'-TTAGGG-3' repeats. Binding of RRM1 to DNA inhibits the formation of DNA quadruplex structure which may play a role in telomere elongation. May be involved in translationally coupled mRNA turnover. Implicated with other RNA-binding proteins in the cytoplasmic deadenylation/translational and decay interplay of the FOS mRNA mediated by the major coding-region determinant of instability (mCRD) domain. May play a role in the regulation of the rhythmic expression of circadian clock core genes. Directly binds to the 3'UTR of CRY1 mRNA and induces CRY1 rhythmic translation. May also be involved in the regulation of PER2 translation. The protein is Heterogeneous nuclear ribonucleoprotein D0 (Hnrnpd) of Mus musculus (Mouse).